Here is an 81-residue protein sequence, read N- to C-terminus: RNA-binding protein Hfq (81 aa).

A Sm domain is found at 10-69 (DPFLNTLRKEHIPVSIYLVNGIKLQGHIDSFDQYVVLLKNTVTQMVYKHAISTVVPARAV).

The protein belongs to the Hfq family. In terms of assembly, homohexamer.

In terms of biological role, RNA chaperone that binds small regulatory RNA (sRNAs) and mRNAs to facilitate mRNA translational regulation in response to envelope stress, environmental stress and changes in metabolite concentrations. Also binds with high specificity to tRNAs. The protein is RNA-binding protein Hfq of Nitrosospira multiformis (strain ATCC 25196 / NCIMB 11849 / C 71).